We begin with the raw amino-acid sequence, 361 residues long: Chorismate synthase (361 aa).

Residues R48 and R54 each coordinate NADP(+). Residues 125–127 (RSS), 238–239 (NA), G278, 293–297 (KPTSS), and R319 each bind FMN.

This sequence belongs to the chorismate synthase family. In terms of assembly, homotetramer. The cofactor is FMNH2.

It carries out the reaction 5-O-(1-carboxyvinyl)-3-phosphoshikimate = chorismate + phosphate. The protein operates within metabolic intermediate biosynthesis; chorismate biosynthesis; chorismate from D-erythrose 4-phosphate and phosphoenolpyruvate: step 7/7. Catalyzes the anti-1,4-elimination of the C-3 phosphate and the C-6 proR hydrogen from 5-enolpyruvylshikimate-3-phosphate (EPSP) to yield chorismate, which is the branch point compound that serves as the starting substrate for the three terminal pathways of aromatic amino acid biosynthesis. This reaction introduces a second double bond into the aromatic ring system. This is Chorismate synthase from Yersinia pseudotuberculosis serotype O:1b (strain IP 31758).